Consider the following 109-residue polypeptide: Protein ripply2 (109 aa).

The segment covering 1 to 15 has biased composition (polar residues); that stretch reads MENITFTSGLNSEMD. Disordered regions lie at residues 1–42 and 88–109; these read MENI…RPAD and YEDP…KELR. Positions 20-23 match the WRPW motif motif; it reads WRPW. Basic and acidic residues predominate over residues 30-42; it reads KAPDYKPYKRPAD. The segment at 53-88 is ripply homology domain; that stretch reads HPVKLFWPKSQCFDYLYEDAEVLLRNYPVQATICLY. A compositionally biased stretch (acidic residues) spans 89 to 109; that stretch reads EDPDTEDEEDYSDEEDEKELR.

The protein belongs to the ripply family. In terms of tissue distribution, first expressed in the paraxial mesoderm at the 90% epiboly stage, and subsequently confined to the presomitic mesoderm. Expressed in the rostral compartment of S-I and S-II.

The protein localises to the nucleus. In terms of biological role, plays a role in somitogenesis. Required for somite segregation and establishment of rostrocaudal polarity in somites. The polypeptide is Protein ripply2 (Danio rerio (Zebrafish)).